The primary structure comprises 255 residues: Small ribosomal subunit protein eS1 (255 aa).

The residue at position 2 (A2) is an N-acetylalanine; partial.

The protein belongs to the eukaryotic ribosomal protein eS1 family. As to quaternary structure, component of the small ribosomal subunit. Mature ribosomes consist of a small (40S) and a large (60S) subunit. The 40S subunit contains about 33 different proteins and 1 molecule of RNA (18S). The 60S subunit contains about 49 different proteins and 3 molecules of RNA (25S, 5.8S and 5S).

It localises to the cytoplasm. This Pyrenophora tritici-repentis (strain Pt-1C-BFP) (Wheat tan spot fungus) protein is Small ribosomal subunit protein eS1 (rps1).